A 573-amino-acid chain; its full sequence is Urease subunit alpha (573 aa).

The Urease domain maps to Gly-136–Phe-573. Positions 141, 143, and 224 each coordinate Ni(2+). N6-carboxylysine is present on Lys-224. His-226 provides a ligand contact to substrate. Residues His-253 and His-279 each coordinate Ni(2+). The active-site Proton donor is the His-327. Asp-367 contributes to the Ni(2+) binding site.

Belongs to the metallo-dependent hydrolases superfamily. Urease alpha subunit family. In terms of assembly, heterotrimer of UreA (gamma), UreB (beta) and UreC (alpha) subunits. Three heterotrimers associate to form the active enzyme. Requires Ni cation as cofactor. Carboxylation allows a single lysine to coordinate two nickel ions.

The protein localises to the cytoplasm. The enzyme catalyses urea + 2 H2O + H(+) = hydrogencarbonate + 2 NH4(+). The protein operates within nitrogen metabolism; urea degradation; CO(2) and NH(3) from urea (urease route): step 1/1. This chain is Urease subunit alpha, found in Mycolicibacterium vanbaalenii (strain DSM 7251 / JCM 13017 / BCRC 16820 / KCTC 9966 / NRRL B-24157 / PYR-1) (Mycobacterium vanbaalenii).